The chain runs to 185 residues: Deoxyuridine 5'-triphosphate nucleotidohydrolase (185 aa).

The disordered stretch occupies residues 1 to 23 (MSHLQAHMQRNNKESHSLSPFSQ). Substrate-binding positions include 95–97 (RSG), Asn108, 112–114 (TID), and Lys122. The segment at 160 to 185 (DQKDSSQTPSNEGSRGADGFGSTGHD) is disordered. Residues 175 to 185 (GADGFGSTGHD) are compositionally biased toward gly residues.

This sequence belongs to the dUTPase family. Mg(2+) serves as cofactor.

It carries out the reaction dUTP + H2O = dUMP + diphosphate + H(+). The protein operates within pyrimidine metabolism; dUMP biosynthesis; dUMP from dCTP (dUTP route): step 2/2. This enzyme is involved in nucleotide metabolism: it produces dUMP, the immediate precursor of thymidine nucleotides and it decreases the intracellular concentration of dUTP so that uracil cannot be incorporated into DNA. This is Deoxyuridine 5'-triphosphate nucleotidohydrolase from Bartonella quintana (strain Toulouse) (Rochalimaea quintana).